The chain runs to 272 residues: Glycerol-3-phosphate acyltransferase (272 aa).

6 helical membrane passes run 9 to 29, 60 to 80, 99 to 119, 149 to 169, 173 to 193, and 226 to 246; these read IIIL…GILI, AIVM…CLLI, VIIY…CFYF, ASIS…ICLI, VSLA…IPHL, and LNWW…VLVI.

This sequence belongs to the PlsY family. In terms of assembly, probably interacts with PlsX.

It localises to the cell membrane. It catalyses the reaction an acyl phosphate + sn-glycerol 3-phosphate = a 1-acyl-sn-glycero-3-phosphate + phosphate. It functions in the pathway lipid metabolism; phospholipid metabolism. In terms of biological role, catalyzes the transfer of an acyl group from acyl-phosphate (acyl-PO(4)) to glycerol-3-phosphate (G3P) to form lysophosphatidic acid (LPA). This enzyme utilizes acyl-phosphate as fatty acyl donor, but not acyl-CoA or acyl-ACP. The polypeptide is Glycerol-3-phosphate acyltransferase (Malacoplasma penetrans (strain HF-2) (Mycoplasma penetrans)).